A 448-amino-acid polypeptide reads, in one-letter code: GA-binding protein subunit beta-2 (448 aa).

5 ANK repeats span residues 5–34 (DLGKRLLEAARKGQDDEVRTLMANGAPFTT), 37–66 (LGTSPLHLAAQYGHYSTAEVLLRAGVSRDA), 70–99 (VDRTPLHMAAADGHAHIVELLVRNGADVNA), 103–132 (LKMTALHWATERHHRDVVELLIKYGADVHA), and 136–166 (FDKSAFDIALEKNNAEILVILQEAMQNQVNV). Ser-256 is modified (phosphoserine). 2 disordered regions span residues 325-354 (EEEEKLPLTKKPRIGEKTNSVEESKEGNER) and 420-448 (ELEERETKVTGSAGTTEPHTRVSMATVSS). Basic and acidic residues predominate over residues 337–354 (RIGEKTNSVEESKEGNER). Residues 345 to 395 (VEESKEGNERELLQQQLQEANRRAQEYRHQLLKKEQEAEQYRLKLEAIARQ) adopt a coiled-coil conformation. Residues 428–448 (VTGSAGTTEPHTRVSMATVSS) are compositionally biased toward polar residues.

In terms of assembly, heterotetramer of two alpha and two beta subunits. The C-terminal is necessary for the formation of a heterotetrameric GABP-alpha-2/beta-2 complex, and also facilitates homotypic dimerization. Interacts with ADGRB2.

The protein localises to the nucleus. In terms of biological role, may function as transcription factor capable of interacting with purine rich repeats (GA repeats). In Homo sapiens (Human), this protein is GA-binding protein subunit beta-2 (GABPB2).